Here is a 426-residue protein sequence, read N- to C-terminus: Lipase 7 (426 aa).

A signal peptide spans 1–15; sequence MFVFLALITLTTCLQ. N-linked (GlcNAc...) asparagine glycans are attached at residues Asn-74, Asn-175, and Asn-179. Cystine bridges form between Cys-108–Cys-269 and Cys-341–Cys-385. The Charge relay system role is filled by Ser-190. Residue Asn-223 is glycosylated (N-linked (GlcNAc...) asparagine). His-358 acts as the Charge relay system in catalysis. Asn-378, Asn-379, Asn-422, and Asn-423 each carry an N-linked (GlcNAc...) asparagine glycan.

This sequence belongs to the AB hydrolase superfamily. Lipase family. Class Lip subfamily.

It catalyses the reaction a triacylglycerol + H2O = a diacylglycerol + a fatty acid + H(+). Functionally, secreted lipase that is able to hydrolze both the neutral triacylglycerols and the monopalmitate ester Tween 40, allowing the use of hydrolyzed products as carbon sources. Has broad lipolytic activity, which may be important for colonization and subsequent infection, therefore contributing to the persistence and virulence in human tissue. This chain is Lipase 7, found in Candida albicans (strain SC5314 / ATCC MYA-2876) (Yeast).